The following is a 182-amino-acid chain: Large ribosomal subunit protein uL6 (182 aa).

Belongs to the universal ribosomal protein uL6 family. Part of the 50S ribosomal subunit.

In terms of biological role, this protein binds to the 23S rRNA, and is important in its secondary structure. It is located near the subunit interface in the base of the L7/L12 stalk, and near the tRNA binding site of the peptidyltransferase center. This is Large ribosomal subunit protein uL6 from Methanococcus vannielii.